We begin with the raw amino-acid sequence, 400 residues long: Tryptophan synthase beta chain (400 aa).

Lys92 carries the N6-(pyridoxal phosphate)lysine modification.

This sequence belongs to the TrpB family. In terms of assembly, tetramer of two alpha and two beta chains. It depends on pyridoxal 5'-phosphate as a cofactor.

The enzyme catalyses (1S,2R)-1-C-(indol-3-yl)glycerol 3-phosphate + L-serine = D-glyceraldehyde 3-phosphate + L-tryptophan + H2O. Its pathway is amino-acid biosynthesis; L-tryptophan biosynthesis; L-tryptophan from chorismate: step 5/5. Its function is as follows. The beta subunit is responsible for the synthesis of L-tryptophan from indole and L-serine. This is Tryptophan synthase beta chain from Neisseria meningitidis serogroup A / serotype 4A (strain DSM 15465 / Z2491).